A 245-amino-acid polypeptide reads, in one-letter code: Tegument protein UL51 homolog (245 aa).

C10 carries the S-palmitoyl cysteine; by host lipid modification. Residues 225–245 (PVKSNLKSKHKPKRKASLVAV) form a disordered region. The segment covering 230–245 (LKSKHKPKRKASLVAV) has biased composition (basic residues).

This sequence belongs to the herpesviridae UL51 family. As to quaternary structure, oligomerizes. Interacts with ORF55; this interaction mediates ORF55 incorporation to virions. In terms of processing, phosphorylated. Palmitoylation is necessary for Golgi localization.

It is found in the virion tegument. It localises to the host cytoplasm. The protein localises to the host Golgi apparatus. In terms of biological role, plays several roles during the time course of infection, including egress of virus particles from the perinuclear space and secondary envelopment of cytoplasmic capsids that bud into specific trans-Golgi network (TGN)-derived membranes. This chain is Tegument protein UL51 homolog, found in Equine herpesvirus 1 (strain Ab4p) (EHV-1).